Reading from the N-terminus, the 111-residue chain is Ig kappa chain V-III region PC 7940 (111 aa).

The framework-1 stretch occupies residues 1-23; sequence DIVLTQSPASLAVSLGQRATISC. Cysteine 23 and cysteine 92 are oxidised to a cystine. The tract at residues 24 to 38 is complementarity-determining-1; sequence RASKSVSAFGYSYMH. Positions 39-53 are framework-2; it reads WYQQKPGQPPKLLIY. Residues 54–60 are complementarity-determining-2; it reads LASNLES. Positions 61 to 92 are framework-3; sequence GVPARFSGSGSGTDFTLNIHPVEEEDAVTYYC. The segment at 93 to 101 is complementarity-determining-3; that stretch reads QHSRELPPT. The interval 102-111 is framework-4; the sequence is FGGGTKLEIK.

The sequence is that of Ig kappa chain V-III region PC 7940 from Mus musculus (Mouse).